Here is a 442-residue protein sequence, read N- to C-terminus: Coiled-coil domain-containing protein 112 (442 aa).

2 coiled-coil regions span residues 23–116 and 217–249; these read LEEL…RRIE and LEEK…VDTV. 3 disordered regions span residues 245–272, 289–312, and 392–442; these read KVDT…KKQK, KLAS…QRQS, and EKVE…RQGI. 2 stretches are compositionally biased toward basic and acidic residues: residues 256–268 and 294–310; these read KAED…EEQR and LREE…ERQR. Residues 281–400 are a coiled coil; the sequence is RKSLEMSAKL…KEKVENNVSR (120 aa).

The protein localises to the cytoplasm. It localises to the cytoskeleton. Its subcellular location is the microtubule organizing center. The protein resides in the centrosome. It is found in the centriolar satellite. The chain is Coiled-coil domain-containing protein 112 (Ccdc112) from Mus musculus (Mouse).